We begin with the raw amino-acid sequence, 232 residues long: Enolase-phosphatase E1 (232 aa).

Belongs to the HAD-like hydrolase superfamily. MasA/MtnC family. In terms of assembly, monomer. Mg(2+) is required as a cofactor.

The catalysed reaction is 5-methylsulfanyl-2,3-dioxopentyl phosphate + H2O = 1,2-dihydroxy-5-(methylsulfanyl)pent-1-en-3-one + phosphate. It participates in amino-acid biosynthesis; L-methionine biosynthesis via salvage pathway; L-methionine from S-methyl-5-thio-alpha-D-ribose 1-phosphate: step 3/6. The protein operates within amino-acid biosynthesis; L-methionine biosynthesis via salvage pathway; L-methionine from S-methyl-5-thio-alpha-D-ribose 1-phosphate: step 4/6. Functionally, bifunctional enzyme that catalyzes the enolization of 2,3-diketo-5-methylthiopentyl-1-phosphate (DK-MTP-1-P) into the intermediate 2-hydroxy-3-keto-5-methylthiopentenyl-1-phosphate (HK-MTPenyl-1-P), which is then dephosphorylated to form the acireductone 1,2-dihydroxy-3-keto-5-methylthiopentene (DHK-MTPene). In Xanthomonas campestris pv. campestris (strain 8004), this protein is Enolase-phosphatase E1.